The following is a 152-amino-acid chain: D-aminoacyl-tRNA deacylase (152 aa).

The Gly-cisPro motif, important for rejection of L-amino acids motif lies at G138–P139.

The protein belongs to the DTD family. In terms of assembly, homodimer.

It localises to the cytoplasm. The enzyme catalyses glycyl-tRNA(Ala) + H2O = tRNA(Ala) + glycine + H(+). It carries out the reaction a D-aminoacyl-tRNA + H2O = a tRNA + a D-alpha-amino acid + H(+). An aminoacyl-tRNA editing enzyme that deacylates mischarged D-aminoacyl-tRNAs. Also deacylates mischarged glycyl-tRNA(Ala), protecting cells against glycine mischarging by AlaRS. Acts via tRNA-based rather than protein-based catalysis; rejects L-amino acids rather than detecting D-amino acids in the active site. By recycling D-aminoacyl-tRNA to D-amino acids and free tRNA molecules, this enzyme counteracts the toxicity associated with the formation of D-aminoacyl-tRNA entities in vivo and helps enforce protein L-homochirality. The sequence is that of D-aminoacyl-tRNA deacylase from Chloroherpeton thalassium (strain ATCC 35110 / GB-78).